Here is a 258-residue protein sequence, read N- to C-terminus: Indole-3-glycerol phosphate synthase (258 aa).

It belongs to the TrpC family.

It catalyses the reaction 1-(2-carboxyphenylamino)-1-deoxy-D-ribulose 5-phosphate + H(+) = (1S,2R)-1-C-(indol-3-yl)glycerol 3-phosphate + CO2 + H2O. Its pathway is amino-acid biosynthesis; L-tryptophan biosynthesis; L-tryptophan from chorismate: step 4/5. This chain is Indole-3-glycerol phosphate synthase, found in Geobacillus kaustophilus (strain HTA426).